Consider the following 304-residue polypeptide: Thymidylate synthase (304 aa).

Residues arginine 30 and 157-158 contribute to the dUMP site; that span reads RR. Residue cysteine 177 is the Nucleophile of the active site. DUMP-binding positions include 206 to 209, asparagine 217, and 247 to 249; these read RSCD and HVY. Aspartate 209 contacts (6R)-5,10-methylene-5,6,7,8-tetrahydrofolate.

It belongs to the thymidylate synthase family. In terms of assembly, homodimer.

It is found in the nucleus. The enzyme catalyses dUMP + (6R)-5,10-methylene-5,6,7,8-tetrahydrofolate = 7,8-dihydrofolate + dTMP. It participates in pyrimidine metabolism; dTTP biosynthesis. Inhibited by 5-fluoro-2'-deoxyuridine 5'-monophosphate (FdUMP). Thymidylate synthase required for de novo biosynthesis of pyrimidine deoxyribonucleotides. Required for both nuclear and mitochondrial DNA synthesis. The sequence is that of Thymidylate synthase (CDC21) from Saccharomyces cerevisiae (strain ATCC 204508 / S288c) (Baker's yeast).